The primary structure comprises 224 residues: CRIB domain-containing protein RIC1 (224 aa).

A CRIB domain is found at Ile29 to Gly42. A disordered region spans residues Val38–Ile224. Polar residues-rich tracts occupy residues Ser69–Arg84, Pro114–Asp132, Ala144–Glu155, and Ser215–Ile224.

Interacts with ARAC11/ROP1. Expressed in columella cells from the root tip and epidermal cells at the base of lateral roots, leaves, stems, flowers, anthers, pollen and siliques.

It localises to the cytoplasm. The protein resides in the cytoskeleton. In terms of biological role, functions as a downstream effector of Rho-related GTP binding proteins of the 'Rho of Plants' (ROPs) family. Participates in the propagation of ROP GTPase signals in specific cellular responses. Required for cortical microtubule organization. Promotes microtubule bundling and formation of well-ordered microtubule arrays in the neck region of pavement cells. This restricts cell lateral expansion to generate the narrow neck morphology of pavement cells. Its function is inhibited when it interacts with activated ARAC4/ROP2. Represses ARAC4/ROP2 activation and antagonizes the RIC4-actin pathway that promotes the assembly of cortical actin microfilaments. Acts as a downstream effector of ARAC3/ROP6 which functions in a signaling pathway that negatively regulates clathrin-mediated endocytosis and internalization of PIN1 and PIN2. Required for the asymmetric auxin distribution during root gravitropism and vascular patterning. Positively regulates auxin responses, but negatively regulates ABA responses during lateral root development and primary root elongation. The sequence is that of CRIB domain-containing protein RIC1 (RIC1) from Arabidopsis thaliana (Mouse-ear cress).